Here is a 175-residue protein sequence, read N- to C-terminus: Anterior gradient protein 2 homolog (175 aa).

An N-terminal signal peptide occupies residues 1-20 (MEKIPVSAFLLLVALSYTLA). Positions 21–40 (RDTTVKPGAKKDTKDSRPKL) are required to promote cell adhesion. 2 short sequence motifs (homodimer stabilization; interchain) span residues 45-54 (SRGWGDQLIW) and 60-67 (EALYKSKT).

This sequence belongs to the AGR family. In terms of assembly, monomer and homodimer. Interacts with LYPD3 and DAG1 (alphaDAG1). Interacts with MUC2; disulfide-linked. Expressed strongly in trachea, lung, stomach, colon, prostate and small intestine. Expressed weakly in pituitary gland, salivary gland, mammary gland, bladder, appendix, ovary, fetal lung, uterus, pancreas, kidney, fetal kidney, testis, placenta, thyroid gland and in estrogen receptor (ER)-positive breast cancer cell lines.

It localises to the secreted. It is found in the endoplasmic reticulum. Functionally, required for MUC2 post-transcriptional synthesis and secretion. May play a role in the production of mucus by intestinal cells. Proto-oncogene that may play a role in cell migration, cell differentiation and cell growth. Promotes cell adhesion. The chain is Anterior gradient protein 2 homolog (AGR2) from Homo sapiens (Human).